The following is a 199-amino-acid chain: Recombination protein RecR (199 aa).

The C4-type zinc finger occupies 58–73 (CSRCFYFTEEDPCPLC). Residues 81–176 (QLICVVEEPQ…KVTRLAHGIP (96 aa)) enclose the Toprim domain.

The protein belongs to the RecR family.

In terms of biological role, may play a role in DNA repair. It seems to be involved in an RecBC-independent recombinational process of DNA repair. It may act with RecF and RecO. The sequence is that of Recombination protein RecR from Syntrophotalea carbinolica (strain DSM 2380 / NBRC 103641 / GraBd1) (Pelobacter carbinolicus).